Consider the following 153-residue polypeptide: SsrA-binding protein (153 aa).

Residues 132–153 (REKDWLRERERVMKHDTRRRSD) are disordered.

The protein belongs to the SmpB family.

It is found in the cytoplasm. Its function is as follows. Required for rescue of stalled ribosomes mediated by trans-translation. Binds to transfer-messenger RNA (tmRNA), required for stable association of tmRNA with ribosomes. tmRNA and SmpB together mimic tRNA shape, replacing the anticodon stem-loop with SmpB. tmRNA is encoded by the ssrA gene; the 2 termini fold to resemble tRNA(Ala) and it encodes a 'tag peptide', a short internal open reading frame. During trans-translation Ala-aminoacylated tmRNA acts like a tRNA, entering the A-site of stalled ribosomes, displacing the stalled mRNA. The ribosome then switches to translate the ORF on the tmRNA; the nascent peptide is terminated with the 'tag peptide' encoded by the tmRNA and targeted for degradation. The ribosome is freed to recommence translation, which seems to be the essential function of trans-translation. This is SsrA-binding protein from Bordetella avium (strain 197N).